The primary structure comprises 267 residues: RWD domain-containing protein 3 (267 aa).

The region spanning 7 to 114 is the RWD domain; that stretch reads EELSVLAAIF…LWIQQNLRHI (108 aa). Interaction with UBE2I/UBC9 regions lie at residues 13 to 15 and 100 to 102; these read AAI and VHE.

As to quaternary structure, isoform 1 and isoform 2 interact with UBE2I/UBC9. Isoform 1 shows a greater interaction with NFKBIA and HIF1A as compared to isoform 2. Isoform 2 interacts with NCOA2 and NR3C1. In terms of tissue distribution, isoform 1 and isoform 2 are expressed in glioma tumors (at protein level). Expressed in a wide number of tissues with highest expression in cerebellum, pituitary, heart, kidney, liver, stomach, pancreas, prostate and spleen. Low levels in thalamus, spinal cord, esophagus, thymus, lung and peripheral blood leukocytes. A higher level expression seen in pituitary tumors as compared to the pituitary gland.

It localises to the nucleus. The protein resides in the cytoplasm. In terms of biological role, enhancer of SUMO conjugation. Via its interaction with UBE2I/UBC9, increases SUMO conjugation to proteins by promoting the binding of E1 and E2 enzymes, thioester linkage between SUMO and UBE2I/UBC9 and transfer of SUMO to specific target proteins which include HIF1A, PIAS, NFKBIA, NR3C1 and TOP1. Isoform 1 and isoform 2 positively regulate the NF-kappa-B signaling pathway by enhancing the sumoylation of NF-kappa-B inhibitor alpha (NFKBIA), promoting its stabilization which consequently leads to an increased inhibition of NF-kappa-B transcriptional activity. Isoform 1 and isoform 2 negatively regulate the hypoxia-inducible factor-1 alpha (HIF1A) signaling pathway by increasing the sumoylation of HIF1A, promoting its stabilization, transcriptional activity and the expression of its target gene VEGFA during hypoxia. Isoform 2 promotes the sumoylation and transcriptional activity of the glucocorticoid receptor NR3C1 and enhances the interaction of SUMO1 and NR3C1 with UBE2I/UBC9. Has no effect on ubiquitination. The sequence is that of RWD domain-containing protein 3 (RWDD3) from Homo sapiens (Human).